The primary structure comprises 231 residues: tRNA (guanine-N(1)-)-methyltransferase (231 aa).

S-adenosyl-L-methionine contacts are provided by residues Gly111 and 131–136 (LGNYVL).

Belongs to the RNA methyltransferase TrmD family. Homodimer.

The protein resides in the cytoplasm. It catalyses the reaction guanosine(37) in tRNA + S-adenosyl-L-methionine = N(1)-methylguanosine(37) in tRNA + S-adenosyl-L-homocysteine + H(+). Its function is as follows. Specifically methylates guanosine-37 in various tRNAs. The sequence is that of tRNA (guanine-N(1)-)-methyltransferase from Leptospira interrogans serogroup Icterohaemorrhagiae serovar copenhageni (strain Fiocruz L1-130).